The sequence spans 493 residues: Alpha-amylase-related protein (493 aa).

Residues 1–19 (MFKLALTLTLCLAGSLSLA) form the signal peptide. Residue Q20 is modified to Pyrrolidone carboxylic acid. A disulfide bridge connects residues C47 and C103. Ca(2+) contacts are provided by N117, Q168, and D177. A disulfide bridge links C156 with C170. Position 205 (R205) interacts with chloride. The Nucleophile role is filled by D207. H211 lines the Ca(2+) pocket. The active-site Proton donor is the E244. Positions 307 and 342 each coordinate chloride. Disulfide bonds link C375–C381, C417–C440, and C447–C459.

The protein belongs to the glycosyl hydrolase 13 family. In terms of assembly, monomer. Ca(2+) is required as a cofactor. Chloride serves as cofactor.

The protein localises to the secreted. The catalysed reaction is Endohydrolysis of (1-&gt;4)-alpha-D-glucosidic linkages in polysaccharides containing three or more (1-&gt;4)-alpha-linked D-glucose units.. The chain is Alpha-amylase-related protein (Amyrel) from Drosophila yakuba (Fruit fly).